The chain runs to 304 residues: Acetyl-coenzyme A carboxylase carboxyl transferase subunit beta (304 aa).

In terms of domain architecture, CoA carboxyltransferase N-terminal spans 23-292 (VWTKCDSCGQ…PNPDAPREGV (270 aa)). Zn(2+)-binding residues include C27, C30, C46, and C49. The C4-type zinc finger occupies 27-49 (CDSCGQVLYRAELERNLEVCPKC). A disordered region spans residues 283–304 (PNPDAPREGVVVPPAPDQESEA).

It belongs to the AccD/PCCB family. In terms of assembly, acetyl-CoA carboxylase is a heterohexamer composed of biotin carboxyl carrier protein (AccB), biotin carboxylase (AccC) and two subunits each of ACCase subunit alpha (AccA) and ACCase subunit beta (AccD). It depends on Zn(2+) as a cofactor.

The protein localises to the cytoplasm. It carries out the reaction N(6)-carboxybiotinyl-L-lysyl-[protein] + acetyl-CoA = N(6)-biotinyl-L-lysyl-[protein] + malonyl-CoA. Its pathway is lipid metabolism; malonyl-CoA biosynthesis; malonyl-CoA from acetyl-CoA: step 1/1. Its function is as follows. Component of the acetyl coenzyme A carboxylase (ACC) complex. Biotin carboxylase (BC) catalyzes the carboxylation of biotin on its carrier protein (BCCP) and then the CO(2) group is transferred by the transcarboxylase to acetyl-CoA to form malonyl-CoA. This chain is Acetyl-coenzyme A carboxylase carboxyl transferase subunit beta, found in Salmonella agona (strain SL483).